The chain runs to 108 residues: Nucleoid-associated protein Mpe_A2533 (108 aa).

Residues 86-108 are disordered; that stretch reads TSEEKMGKLTAGMPLPPGMKLPF. Positions 99 to 108 are enriched in pro residues; sequence PLPPGMKLPF.

Belongs to the YbaB/EbfC family. As to quaternary structure, homodimer.

The protein resides in the cytoplasm. It localises to the nucleoid. Functionally, binds to DNA and alters its conformation. May be involved in regulation of gene expression, nucleoid organization and DNA protection. This is Nucleoid-associated protein Mpe_A2533 from Methylibium petroleiphilum (strain ATCC BAA-1232 / LMG 22953 / PM1).